A 274-amino-acid polypeptide reads, in one-letter code: Thiazole synthase (274 aa).

The Schiff-base intermediate with DXP role is filled by K111. Residues G172, 198-199 (AG), and 220-221 (NT) each bind 1-deoxy-D-xylulose 5-phosphate.

Belongs to the ThiG family. Homotetramer. Forms heterodimers with either ThiH or ThiS.

The protein localises to the cytoplasm. The catalysed reaction is [ThiS sulfur-carrier protein]-C-terminal-Gly-aminoethanethioate + 2-iminoacetate + 1-deoxy-D-xylulose 5-phosphate = [ThiS sulfur-carrier protein]-C-terminal Gly-Gly + 2-[(2R,5Z)-2-carboxy-4-methylthiazol-5(2H)-ylidene]ethyl phosphate + 2 H2O + H(+). The protein operates within cofactor biosynthesis; thiamine diphosphate biosynthesis. Catalyzes the rearrangement of 1-deoxy-D-xylulose 5-phosphate (DXP) to produce the thiazole phosphate moiety of thiamine. Sulfur is provided by the thiocarboxylate moiety of the carrier protein ThiS. In vitro, sulfur can be provided by H(2)S. The sequence is that of Thiazole synthase from Gloeobacter violaceus (strain ATCC 29082 / PCC 7421).